A 149-amino-acid chain; its full sequence is Arginine repressor (149 aa).

Belongs to the ArgR family.

It is found in the cytoplasm. The protein operates within amino-acid biosynthesis; L-arginine biosynthesis [regulation]. Functionally, regulates arginine biosynthesis genes. This is Arginine repressor from Exiguobacterium sibiricum (strain DSM 17290 / CCUG 55495 / CIP 109462 / JCM 13490 / 255-15).